The following is a 199-amino-acid chain: Protein GrpE (199 aa).

Residues 1-24 (MSKQNKKDWKKFKDEHKEEHKVEN) are compositionally biased toward basic and acidic residues. Residues 1–47 (MSKQNKKDWKKFKDEHKEEHKVENEILEEEIDEKSQHQEPALGHPSY) form a disordered region.

It belongs to the GrpE family. In terms of assembly, homodimer.

It is found in the cytoplasm. Participates actively in the response to hyperosmotic and heat shock by preventing the aggregation of stress-denatured proteins, in association with DnaK and GrpE. It is the nucleotide exchange factor for DnaK and may function as a thermosensor. Unfolded proteins bind initially to DnaJ; upon interaction with the DnaJ-bound protein, DnaK hydrolyzes its bound ATP, resulting in the formation of a stable complex. GrpE releases ADP from DnaK; ATP binding to DnaK triggers the release of the substrate protein, thus completing the reaction cycle. Several rounds of ATP-dependent interactions between DnaJ, DnaK and GrpE are required for fully efficient folding. This chain is Protein GrpE, found in Legionella pneumophila (strain Paris).